Consider the following 407-residue polypeptide: Putative F-box protein At5g60560 (407 aa).

The region spanning T2 to K49 is the F-box domain.

This is Putative F-box protein At5g60560 from Arabidopsis thaliana (Mouse-ear cress).